A 78-amino-acid polypeptide reads, in one-letter code: MKATKLVLGAVILGSTLLAGCSSNAKIDQLSSDVQTLNAKVDQLSNDVNAMRSDVQAAKDDAARANQRLDNMATKYRK.

Residues Met-1–Gly-20 form the signal peptide. Cys-21 carries N-palmitoyl cysteine lipidation. Residue Cys-21 is the site of S-diacylglycerol cysteine attachment. 2 repeats span residues Asn-24–Val-34 and Asn-38–Val-48. Residues Ile-27 to Lys-75 adopt a coiled-coil conformation. N6-murein peptidoglycan lysine is present on Lys-78.

It belongs to the Lpp family. Homotrimer.

It localises to the cell outer membrane. The protein resides in the secreted. It is found in the cell wall. A highly abundant outer membrane lipoprotein that controls the distance between the inner and outer membranes. The only protein known to be covalently linked to the peptidoglycan network (PGN). Also non-covalently binds the PGN. The link between the cell outer membrane and PGN contributes to maintenance of the structural and functional integrity of the cell envelope, and maintains the correct distance between the PGN and the outer membrane. The protein is Major outer membrane lipoprotein Lpp of Shigella flexneri.